Consider the following 474-residue polypeptide: Glycogen synthase (474 aa).

Lys15 provides a ligand contact to ADP-alpha-D-glucose.

The protein belongs to the glycosyltransferase 1 family. Bacterial/plant glycogen synthase subfamily.

The enzyme catalyses [(1-&gt;4)-alpha-D-glucosyl](n) + ADP-alpha-D-glucose = [(1-&gt;4)-alpha-D-glucosyl](n+1) + ADP + H(+). Its pathway is glycan biosynthesis; glycogen biosynthesis. Its function is as follows. Synthesizes alpha-1,4-glucan chains using ADP-glucose. This chain is Glycogen synthase, found in Chlamydia trachomatis serovar D (strain ATCC VR-885 / DSM 19411 / UW-3/Cx).